Here is an 84-residue protein sequence, read N- to C-terminus: Serine protease inhibitor Kazal-type 2 (84 aa).

The first 23 residues, Met-1 to Pro-23, serve as a signal peptide directing secretion. A Pyrrolidone carboxylic acid modification is found at Gln-24. Residues Lys-30–Cys-84 form the Kazal-like domain. Intrachain disulfides connect Cys-36–Cys-66, Cys-44–Cys-63, and Cys-52–Cys-84.

In terms of tissue distribution, expressed in epididymis (at protein level).

Its subcellular location is the secreted. It is found in the cytoplasmic vesicle. It localises to the secretory vesicle. The protein localises to the acrosome. In terms of biological role, as a strong inhibitor of acrosin, it is required for normal spermiogenesis. It probably hinders premature activation of proacrosin and other proteases, thus preventing the cascade of events leading to spermiogenesis defects. May be involved in the regulation of serine protease-dependent germ cell apoptosis. It also inhibits trypsin. In Homo sapiens (Human), this protein is Serine protease inhibitor Kazal-type 2 (SPINK2).